A 152-amino-acid chain; its full sequence is Small ribosomal subunit protein bS16 (152 aa).

A disordered region spans residues tryptophan 84–glutamate 152. Positions proline 97 to lysine 123 are enriched in basic and acidic residues. Residues alanine 124–alanine 144 are compositionally biased toward low complexity.

It belongs to the bacterial ribosomal protein bS16 family.

In Maricaulis maris (strain MCS10) (Caulobacter maris), this protein is Small ribosomal subunit protein bS16.